We begin with the raw amino-acid sequence, 472 residues long: Serralysin A (472 aa).

A propeptide spanning residues 1 to 17 is cleaved from the precursor; it reads MEKNLSSRDDDALHSLS. H186 contributes to the Zn(2+) binding site. E187 is a catalytic residue. H190 and Y221 together coordinate Zn(2+). Residues R258, G260, T262, D290, G292, G293, T332, E334, G339, G341, D343, N348, A350, N352, G356, G357, A358, G359, D361, G365, G366, G367, G368, D370, G374, G375, G377, D379, D388, D395, and D405 each contribute to the Ca(2+) site. Hemolysin-type calcium-binding repeat units lie at residues 337–354 and 355–372; these read IGGS…DNIL and RGGA…ADRL.

The protein belongs to the peptidase M10B family. The cofactor is Ca(2+). Requires Zn(2+) as cofactor.

It localises to the secreted. It carries out the reaction Preferential cleavage of bonds with hydrophobic residues in P1'.. This Dickeya chrysanthemi (Pectobacterium chrysanthemi) protein is Serralysin A (prtA).